The following is a 195-amino-acid chain: 3-isopropylmalate dehydratase small subunit (195 aa).

It belongs to the LeuD family. LeuD type 1 subfamily. As to quaternary structure, heterodimer of LeuC and LeuD.

It catalyses the reaction (2R,3S)-3-isopropylmalate = (2S)-2-isopropylmalate. It participates in amino-acid biosynthesis; L-leucine biosynthesis; L-leucine from 3-methyl-2-oxobutanoate: step 2/4. Functionally, catalyzes the isomerization between 2-isopropylmalate and 3-isopropylmalate, via the formation of 2-isopropylmaleate. The chain is 3-isopropylmalate dehydratase small subunit from Corynebacterium kroppenstedtii (strain DSM 44385 / JCM 11950 / CIP 105744 / CCUG 35717).